A 223-amino-acid polypeptide reads, in one-letter code: MFRSLVRKTTPLLAFGVGIAAFPKDWRKGQFGDKKLLVINDSVLEQIRSTDRYKQLVNDPNLKHYNSSHAFPDQHHKNYVNTGLLFGPDLMEIDPIVFLDEKNGELTSFYHLGDKLISQDGQIHNGIVSTILDEGLCSAGFPLLPSKKGVTASLSIDFKNQAPPQSTVVLHAKVKEAKGRKVVIEGYLETLPLNKSETPLLIAESKCVLVEPKWFKYFAWLQV.

Residues 1 to 12 (MFRSLVRKTTPL) constitute a mitochondrion transit peptide.

It localises to the mitochondrion. This is an uncharacterized protein from Candida albicans (strain WO-1) (Yeast).